A 471-amino-acid chain; its full sequence is Glutamate--tRNA ligase 1 (471 aa).

A 'HIGH' region motif is present at residues 15–25; the sequence is PSPTGYLHIGG. The short motif at 243-247 is the 'KMSKS' region element; sequence KLSKR. Lys246 is a binding site for ATP.

This sequence belongs to the class-I aminoacyl-tRNA synthetase family. Glutamate--tRNA ligase type 1 subfamily. Monomer.

It is found in the cytoplasm. The catalysed reaction is tRNA(Glu) + L-glutamate + ATP = L-glutamyl-tRNA(Glu) + AMP + diphosphate. Functionally, catalyzes the attachment of glutamate to tRNA(Glu) in a two-step reaction: glutamate is first activated by ATP to form Glu-AMP and then transferred to the acceptor end of tRNA(Glu). This Cereibacter sphaeroides (strain ATCC 17023 / DSM 158 / JCM 6121 / CCUG 31486 / LMG 2827 / NBRC 12203 / NCIMB 8253 / ATH 2.4.1.) (Rhodobacter sphaeroides) protein is Glutamate--tRNA ligase 1.